The chain runs to 374 residues: Flagellar P-ring protein 1 (374 aa).

Positions 1–26 (MVPNLMVIKKHLIGLLLILCPLSLQA) are cleaved as a signal peptide.

It belongs to the FlgI family. As to quaternary structure, the basal body constitutes a major portion of the flagellar organelle and consists of four rings (L,P,S, and M) mounted on a central rod.

The protein localises to the periplasm. The protein resides in the bacterial flagellum basal body. Functionally, assembles around the rod to form the L-ring and probably protects the motor/basal body from shearing forces during rotation. In Photobacterium profundum (strain SS9), this protein is Flagellar P-ring protein 1.